The primary structure comprises 196 residues: Ras-related protein RabC (196 aa).

13–20 provides a ligand contact to GTP; that stretch reads GESGVGKS. An Effector region motif is present at residues 35–43; it reads FAPTLGVDF. GTP contacts are provided by residues 63 to 67 and 121 to 124; these read DTAGQ and NKSD. S-geranylgeranyl cysteine attachment occurs at residues C195 and C196.

It belongs to the small GTPase superfamily. Rab family.

It is found in the cell membrane. This is Ras-related protein RabC (rabC) from Dictyostelium discoideum (Social amoeba).